The following is a 238-amino-acid chain: Ribosomal RNA small subunit methyltransferase G (238 aa).

S-adenosyl-L-methionine-binding positions include Gly-77, Phe-82, 128-129 (AE), and Arg-147.

The protein belongs to the methyltransferase superfamily. RNA methyltransferase RsmG family.

It localises to the cytoplasm. Functionally, specifically methylates the N7 position of guanine in position 535 of 16S rRNA. This Listeria innocua serovar 6a (strain ATCC BAA-680 / CLIP 11262) protein is Ribosomal RNA small subunit methyltransferase G.